The primary structure comprises 283 residues: Phosphatidylserine decarboxylase proenzyme (283 aa).

Active-site charge relay system; for autoendoproteolytic cleavage activity residues include Asp-88, His-145, and Ser-248. The Schiff-base intermediate with substrate; via pyruvic acid; for decarboxylase activity role is filled by Ser-248. Residue Ser-248 is modified to Pyruvic acid (Ser); by autocatalysis.

The protein belongs to the phosphatidylserine decarboxylase family. PSD-B subfamily. Prokaryotic type I sub-subfamily. In terms of assembly, heterodimer of a large membrane-associated beta subunit and a small pyruvoyl-containing alpha subunit. Pyruvate serves as cofactor. In terms of processing, is synthesized initially as an inactive proenzyme. Formation of the active enzyme involves a self-maturation process in which the active site pyruvoyl group is generated from an internal serine residue via an autocatalytic post-translational modification. Two non-identical subunits are generated from the proenzyme in this reaction, and the pyruvate is formed at the N-terminus of the alpha chain, which is derived from the carboxyl end of the proenzyme. The autoendoproteolytic cleavage occurs by a canonical serine protease mechanism, in which the side chain hydroxyl group of the serine supplies its oxygen atom to form the C-terminus of the beta chain, while the remainder of the serine residue undergoes an oxidative deamination to produce ammonia and the pyruvoyl prosthetic group on the alpha chain. During this reaction, the Ser that is part of the protease active site of the proenzyme becomes the pyruvoyl prosthetic group, which constitutes an essential element of the active site of the mature decarboxylase.

The protein resides in the cell membrane. The enzyme catalyses a 1,2-diacyl-sn-glycero-3-phospho-L-serine + H(+) = a 1,2-diacyl-sn-glycero-3-phosphoethanolamine + CO2. It participates in phospholipid metabolism; phosphatidylethanolamine biosynthesis; phosphatidylethanolamine from CDP-diacylglycerol: step 2/2. In terms of biological role, catalyzes the formation of phosphatidylethanolamine (PtdEtn) from phosphatidylserine (PtdSer). This Methylibium petroleiphilum (strain ATCC BAA-1232 / LMG 22953 / PM1) protein is Phosphatidylserine decarboxylase proenzyme.